We begin with the raw amino-acid sequence, 234 residues long: 1-(5-phosphoribosyl)-5-[(5-phosphoribosylamino)methylideneamino] imidazole-4-carboxamide isomerase (234 aa).

Asp-9 acts as the Proton acceptor in catalysis. The active-site Proton donor is the Asp-131.

It belongs to the HisA/HisF family.

It localises to the cytoplasm. It catalyses the reaction 1-(5-phospho-beta-D-ribosyl)-5-[(5-phospho-beta-D-ribosylamino)methylideneamino]imidazole-4-carboxamide = 5-[(5-phospho-1-deoxy-D-ribulos-1-ylimino)methylamino]-1-(5-phospho-beta-D-ribosyl)imidazole-4-carboxamide. Its pathway is amino-acid biosynthesis; L-histidine biosynthesis; L-histidine from 5-phospho-alpha-D-ribose 1-diphosphate: step 4/9. This Staphylococcus carnosus (strain TM300) protein is 1-(5-phosphoribosyl)-5-[(5-phosphoribosylamino)methylideneamino] imidazole-4-carboxamide isomerase.